The following is a 353-amino-acid chain: Photosystem II D2 protein (353 aa).

An N-acetylthreonine modification is found at threonine 2. Position 2 is a phosphothreonine (threonine 2). Residues 41-61 traverse the membrane as a helical segment; it reads CAYFALGGWFTGTTFVTSWYT. Histidine 118 is a chlorophyll a binding site. The chain crosses the membrane as a helical span at residues 125-141; that stretch reads GFMLRQFELARSVQLRP. The pheophytin a site is built by glutamine 130 and asparagine 143. A helical transmembrane segment spans residues 153–166; sequence VFVSVFLIYPLGQS. Histidine 198 contacts chlorophyll a. The chain crosses the membrane as a helical span at residues 208–228; that stretch reads AALLCAIHGATVENTLFEDGD. Histidine 215 and phenylalanine 262 together coordinate a plastoquinone. Histidine 215 contacts Fe cation. Histidine 269 serves as a coordination point for Fe cation. The helical transmembrane segment at 279-295 threads the bilayer; that stretch reads GLWMSAIGVVGLALNLR.

The protein belongs to the reaction center PufL/M/PsbA/D family. As to quaternary structure, PSII is composed of 1 copy each of membrane proteins PsbA, PsbB, PsbC, PsbD, PsbE, PsbF, PsbH, PsbI, PsbJ, PsbK, PsbL, PsbM, PsbT, PsbX, PsbY, PsbZ, Psb30/Ycf12, at least 3 peripheral proteins of the oxygen-evolving complex and a large number of cofactors. It forms dimeric complexes. The D1/D2 heterodimer binds P680, chlorophylls that are the primary electron donor of PSII, and subsequent electron acceptors. It shares a non-heme iron and each subunit binds pheophytin, quinone, additional chlorophylls, carotenoids and lipids. There is also a Cl(-1) ion associated with D1 and D2, which is required for oxygen evolution. The PSII complex binds additional chlorophylls, carotenoids and specific lipids. serves as cofactor.

The protein localises to the plastid. It is found in the chloroplast thylakoid membrane. The enzyme catalyses 2 a plastoquinone + 4 hnu + 2 H2O = 2 a plastoquinol + O2. Its function is as follows. Photosystem II (PSII) is a light-driven water:plastoquinone oxidoreductase that uses light energy to abstract electrons from H(2)O, generating O(2) and a proton gradient subsequently used for ATP formation. It consists of a core antenna complex that captures photons, and an electron transfer chain that converts photonic excitation into a charge separation. The D1/D2 (PsbA/PsbD) reaction center heterodimer binds P680, the primary electron donor of PSII as well as several subsequent electron acceptors. D2 is needed for assembly of a stable PSII complex. The polypeptide is Photosystem II D2 protein (Agrostis stolonifera (Creeping bentgrass)).